The sequence spans 270 residues: tRNA pseudouridine synthase A (270 aa).

Asp-60 serves as the catalytic Nucleophile. The tract at residues 107–111 is RNA binding; that stretch reads FHARF. Residue Tyr-118 participates in substrate binding. The interval 168 to 172 is interaction with tRNA; it reads QCQSR.

It belongs to the tRNA pseudouridine synthase TruA family. Homodimer.

It carries out the reaction uridine(38/39/40) in tRNA = pseudouridine(38/39/40) in tRNA. Its function is as follows. Formation of pseudouridine at positions 38, 39 and 40 in the anticodon stem and loop of transfer RNAs. This Escherichia fergusonii (strain ATCC 35469 / DSM 13698 / CCUG 18766 / IAM 14443 / JCM 21226 / LMG 7866 / NBRC 102419 / NCTC 12128 / CDC 0568-73) protein is tRNA pseudouridine synthase A.